We begin with the raw amino-acid sequence, 238 residues long: MGRKWANIVAKKTAKDGATSKIYAKFGVEIYAAAKQGEPDPELNTSLKFVIERAKQAQVPKHVIDKAIDKAKGGGDETFVQGRYEGFGPNGSMIIAETLTSNVNRTIANVRTIFNKKGGNIGAAGSVSYMFDNTGVIVFKGSDPDHIFEILLEAEVDVRDVTEEEGNIVIYTEPTDLHKGIAALKAAGISEFSTTELEMIAQSEVELSPEDLEIFEGLVDALEDDDDVQKVYHNVANL.

This sequence belongs to the TACO1 family. YeeN subfamily.

It localises to the cytoplasm. In Escherichia coli O157:H7, this protein is Probable transcriptional regulatory protein YeeN.